A 171-amino-acid polypeptide reads, in one-letter code: Ribosome maturation factor RimP (171 aa).

This sequence belongs to the RimP family.

It is found in the cytoplasm. Required for maturation of 30S ribosomal subunits. The chain is Ribosome maturation factor RimP from Anaeromyxobacter sp. (strain K).